Consider the following 552-residue polypeptide: Putative transport protein HAPS_0158 (552 aa).

5 helical membrane-spanning segments follow: residues 4 to 24 (IALTVSLLSLVAVIGLWIGHI), 28 to 48 (GVSLGIGGVLFGGILVSHFMT), 65 to 85 (FGLILFVYTIGIQVGPGFFAS), 95 to 115 (AFAVMIVGISGILVILLHKIF), and 157 to 177 (MGYAIAYPFGIIGILLAMWLI). RCK C-terminal domains are found at residues 193-275 (DSAT…ILGE) and 277-360 (VNVS…IIGN). Transmembrane regions (helical) follow at residues 370–390 (MLPIFIGVGLGVLLGSIPIYL), 393–413 (FPVALKLGLAGGPLVVALILA), 438–458 (IVLFLAVVGWKAGGNFLNTLL), 463–483 (LAWIGYGAIITFVPLIVTGLV), 492–512 (YLSLCGLLAGSMTDPPALAFA), and 532–552 (LVMFCRIILPQILAILLWVAG).

Belongs to the AAE transporter (TC 2.A.81) family. YidE subfamily.

It localises to the cell membrane. In Glaesserella parasuis serovar 5 (strain SH0165) (Haemophilus parasuis), this protein is Putative transport protein HAPS_0158.